A 100-amino-acid chain; its full sequence is UPF0473 protein Csac_1599 (100 aa).

It belongs to the UPF0473 family.

This Caldicellulosiruptor saccharolyticus (strain ATCC 43494 / DSM 8903 / Tp8T 6331) protein is UPF0473 protein Csac_1599.